The following is a 437-amino-acid chain: GTPase Der (437 aa).

EngA-type G domains follow at residues 4-168 and 178-353; these read NIVA…PEKP and PRFA…ENRK. GTP-binding positions include 10 to 17, 57 to 61, 120 to 123, 184 to 191, 231 to 235, and 296 to 299; these read GRPNVGKS, DTGGY, NKVD, GRPNAGKS, DTAGI, and NKWD. A KH-like domain is found at 354 to 437; that stretch reads QRISTSKFNE…VPIDIYIREK (84 aa).

Belongs to the TRAFAC class TrmE-Era-EngA-EngB-Septin-like GTPase superfamily. EngA (Der) GTPase family. As to quaternary structure, associates with the 50S ribosomal subunit.

Functionally, GTPase that plays an essential role in the late steps of ribosome biogenesis. This chain is GTPase Der, found in Flavobacterium johnsoniae (strain ATCC 17061 / DSM 2064 / JCM 8514 / BCRC 14874 / CCUG 350202 / NBRC 14942 / NCIMB 11054 / UW101) (Cytophaga johnsonae).